A 170-amino-acid chain; its full sequence is Adenine phosphoribosyltransferase (170 aa).

The protein belongs to the purine/pyrimidine phosphoribosyltransferase family. Homodimer.

It is found in the cytoplasm. It carries out the reaction AMP + diphosphate = 5-phospho-alpha-D-ribose 1-diphosphate + adenine. It functions in the pathway purine metabolism; AMP biosynthesis via salvage pathway; AMP from adenine: step 1/1. In terms of biological role, catalyzes a salvage reaction resulting in the formation of AMP, that is energically less costly than de novo synthesis. In Symbiobacterium thermophilum (strain DSM 24528 / JCM 14929 / IAM 14863 / T), this protein is Adenine phosphoribosyltransferase.